The chain runs to 150 residues: Putative F-box protein At2g33655 (150 aa).

Residues 1–47 (MEKMSDLPRELVEEILSRVPVKSMREVRVTCKTWNALSKHISKAEAA) enclose the F-box domain.

This chain is Putative F-box protein At2g33655, found in Arabidopsis thaliana (Mouse-ear cress).